The following is a 516-amino-acid chain: Zinc finger protein 83 (516 aa).

The disordered stretch occupies residues M1–N20. A C2H2-type 1; degenerate zinc finger spans residues Y93–H115. 14 consecutive C2H2-type zinc fingers follow at residues F121–H143, Y149–H171, Y177–H199, Y205–H227, Y233–H255, Y261–H283, Y289–H311, Y317–H339, Y345–H367, Y373–H395, Y401–H423, Y429–H451, F457–H479, and F485–H507.

It belongs to the krueppel C2H2-type zinc-finger protein family.

Its subcellular location is the nucleus. May be involved in transcriptional regulation. The chain is Zinc finger protein 83 (ZNF83) from Homo sapiens (Human).